The sequence spans 554 residues: Thermosome subunit alpha (554 aa).

Positions 530–554 are disordered; that stretch reads PKKKEKKGKTGEEEEEEGGGSKFEF.

It belongs to the TCP-1 chaperonin family. In terms of assembly, forms a Heterooligomeric complex of two stacked eight-membered rings.

Molecular chaperone; binds unfolded polypeptides in vitro, and has a weak ATPase activity. This is Thermosome subunit alpha (thsA) from Aeropyrum pernix (strain ATCC 700893 / DSM 11879 / JCM 9820 / NBRC 100138 / K1).